The sequence spans 99 residues: Seminal vesicle secretory protein 6 (99 aa).

An N-terminal signal peptide occupies residues 1-21 (MSPTSFFLLTMLLVLVTETAA).

It belongs to the SVP2/SVP5/SVP6 family. In terms of tissue distribution, testis.

The protein resides in the secreted. It localises to the extracellular space. The chain is Seminal vesicle secretory protein 6 (Svs6) from Mus musculus (Mouse).